The following is a 332-amino-acid chain: Ribosomal RNA small subunit methyltransferase H (332 aa).

S-adenosyl-L-methionine contacts are provided by residues 39–41 (GGY), D56, F83, D100, and Q107.

This sequence belongs to the methyltransferase superfamily. RsmH family.

It localises to the cytoplasm. It catalyses the reaction cytidine(1402) in 16S rRNA + S-adenosyl-L-methionine = N(4)-methylcytidine(1402) in 16S rRNA + S-adenosyl-L-homocysteine + H(+). Functionally, specifically methylates the N4 position of cytidine in position 1402 (C1402) of 16S rRNA. The sequence is that of Ribosomal RNA small subunit methyltransferase H from Bartonella quintana (strain Toulouse) (Rochalimaea quintana).